The following is a 212-amino-acid chain: MDPSGPGPSSAAAGGAPAVAAAPQPPAQLSRYESQKRRDWNTFLQYLRNHRPPLTLARCSGAHVIEFLRYLDQFGKTKVHASGCAFYGQPSPPGPCPCPLRQAWGSLDALIGRLRAAYEESGGTPESNPFAARAVRIYLREVRDSQAKARGIPYEKKKRKRSQAAQPAGVEPSGSSSAAAAAAGGGDAGSGGGAAATTTAQPGGSGTAPSAS.

The segment covering 1–22 (MDPSGPGPSSAAAGGAPAVAAA) has biased composition (low complexity). 2 disordered regions span residues 1–34 (MDPSGPGPSSAAAGGAPAVAAAPQPPAQLSRYES) and 148–212 (KARG…PSAS). Residues 31–158 (RYESQKRRDW…ARGIPYEKKK (128 aa)) form the ALOG domain. The short motif at 156 to 160 (KKKRK) is the Nuclear localization signal element. Residues 167–182 (PAGVEPSGSSSAAAAA) show a composition bias toward low complexity. Gly residues predominate over residues 183-194 (AGGGDAGSGGGA). A compositionally biased stretch (low complexity) spans 195-212 (AATTTAQPGGSGTAPSAS).

This sequence belongs to the plant homeotic and developmental regulators ALOG protein family.

The protein resides in the nucleus. Functionally, probable transcription regulator that acts as a developmental regulator by promoting cell growth in response to light. This chain is Protein G1-like7 (G1L7), found in Oryza sativa subsp. japonica (Rice).